A 1060-amino-acid chain; its full sequence is Carbamoyl phosphate synthase large chain (1060 aa).

The interval 1 to 400 (MPRDESINKV…SLNKAIRSLD (400 aa)) is carboxyphosphate synthetic domain. Positions 127, 167, 173, 174, 206, 208, 213, 240, 241, 242, 283, and 297 each coordinate ATP. Positions 131 to 326 (DSFMKKLNEP…IAKIAAKIAV (196 aa)) constitute an ATP-grasp 1 domain. Mg(2+) is bound by residues glutamine 283, glutamate 297, and asparagine 299. Glutamine 283, glutamate 297, and asparagine 299 together coordinate Mn(2+). The interval 401–539 (IGADGFTETP…YGCYDLEDEV (139 aa)) is oligomerization domain. The interval 540-926 (EVSDRRKVLI…YKSQLSASMD (387 aa)) is carbamoyl phosphate synthetic domain. The ATP-grasp 2 domain occupies 664–858 (TEVLNKLGIP…LAKMAARLMM (195 aa)). 10 residues coordinate ATP: arginine 700, lysine 739, leucine 741, glutamate 746, glycine 771, valine 772, histidine 773, serine 774, glutamine 814, and glutamate 829. Residues glutamine 814, glutamate 829, and asparagine 831 each contribute to the Mg(2+) site. 3 residues coordinate Mn(2+): glutamine 814, glutamate 829, and asparagine 831. One can recognise an MGS-like domain in the interval 925-1060 (MDLLNEGKVF…VKSLDEYHGM (136 aa)). Positions 927 to 1060 (LLNEGKVFIS…VKSLDEYHGM (134 aa)) are allosteric domain.

This sequence belongs to the CarB family. In terms of assembly, composed of two chains; the small (or glutamine) chain promotes the hydrolysis of glutamine to ammonia, which is used by the large (or ammonia) chain to synthesize carbamoyl phosphate. Tetramer of heterodimers (alpha,beta)4. Mg(2+) serves as cofactor. It depends on Mn(2+) as a cofactor.

The catalysed reaction is hydrogencarbonate + L-glutamine + 2 ATP + H2O = carbamoyl phosphate + L-glutamate + 2 ADP + phosphate + 2 H(+). It catalyses the reaction hydrogencarbonate + NH4(+) + 2 ATP = carbamoyl phosphate + 2 ADP + phosphate + 2 H(+). It functions in the pathway amino-acid biosynthesis; L-arginine biosynthesis; carbamoyl phosphate from bicarbonate: step 1/1. It participates in pyrimidine metabolism; UMP biosynthesis via de novo pathway; (S)-dihydroorotate from bicarbonate: step 1/3. In terms of biological role, large subunit of the glutamine-dependent carbamoyl phosphate synthetase (CPSase). CPSase catalyzes the formation of carbamoyl phosphate from the ammonia moiety of glutamine, carbonate, and phosphate donated by ATP, constituting the first step of 2 biosynthetic pathways, one leading to arginine and/or urea and the other to pyrimidine nucleotides. The large subunit (synthetase) binds the substrates ammonia (free or transferred from glutamine from the small subunit), hydrogencarbonate and ATP and carries out an ATP-coupled ligase reaction, activating hydrogencarbonate by forming carboxy phosphate which reacts with ammonia to form carbamoyl phosphate. In Methanothermobacter thermautotrophicus (strain ATCC 29096 / DSM 1053 / JCM 10044 / NBRC 100330 / Delta H) (Methanobacterium thermoautotrophicum), this protein is Carbamoyl phosphate synthase large chain.